The sequence spans 300 residues: Putative heme-binding peroxidase (300 aa).

His39 (proton acceptor) is an active-site residue. 2 disordered regions span residues 44 to 64 and 116 to 135; these read YDKS…EAEG and GRTD…LPDA. Basic and acidic residues predominate over residues 116–126; sequence GRTDFADDSRV. A heme b-binding site is contributed by His163. The Tryptophan radical intermediate role is filled by Trp179.

The protein belongs to the peroxidase family. Cytochrome c peroxidase subfamily. The cofactor is heme b.

Destroys radicals which are normally produced within the cells and which are toxic to biological systems. This Pyricularia oryzae (strain 70-15 / ATCC MYA-4617 / FGSC 8958) (Rice blast fungus) protein is Putative heme-binding peroxidase.